We begin with the raw amino-acid sequence, 416 residues long: 3-oxoacyl-[acyl-carrier-protein] synthase 1 (416 aa).

The Ketosynthase family 3 (KS3) domain maps to 11 to 415 (FPSVVVTAVT…GHNVALAFGR (405 aa)). Residues Cys171, His311, and His345 each act as for beta-ketoacyl synthase activity in the active site. Residues His311 and His345 each contribute to the substrate site.

The protein belongs to the thiolase-like superfamily. Beta-ketoacyl-ACP synthases family.

It localises to the cytoplasm. The catalysed reaction is an ultra-long-chain mono-unsaturated fatty acyl-[ACP] + malonyl-[ACP] + H(+) = a 3-oxo-ultra-long-chain mono-unsaturated fatty acyl-[ACP] + holo-[ACP] + CO2. Its pathway is lipid metabolism; mycolic acid biosynthesis. In terms of biological role, part of the mycobacterial fatty acid elongation system FAS-II, which is involved in mycolic acid biosynthesis. Catalyzes the elongation of long chain acyl-ACP substrates by the addition of two carbons from malonyl-ACP to an acyl acceptor. Involved in the initial extension of the mycolate chain and forms monounsaturated fatty acids that averaged 40 carbons in length. The sequence is that of 3-oxoacyl-[acyl-carrier-protein] synthase 1 (kasA) from Mycobacterium leprae (strain TN).